The sequence spans 362 residues: Sphingolipid delta(4)-desaturase (362 aa).

Positions 1-10 (MAESTATTTA) are enriched in low complexity. Residues 1–20 (MAESTATTTAVPPPAEESWN) form a disordered region. The next 3 helical transmembrane spans lie at 60–80 (PLTK…AYLL), 90–110 (FFLT…LAIH), and 121–143 (TLYN…AASF). Positions 110–114 (HELSH) match the Histidine box-1 motif. A Histidine box-2 motif is present at residues 147-151 (HMEHH). Helical transmembrane passes span 169-189 (LILF…LLFY), 200-220 (PFTL…YLVV), and 228-248 (LAYF…AGHF). The short motif at 290-294 (HIEHH) is the Histidine box-3 element.

The protein belongs to the fatty acid desaturase type 1 family. DEGS subfamily.

The protein resides in the membrane. It carries out the reaction an N-acylsphinganine + 2 Fe(II)-[cytochrome b5] + O2 + 2 H(+) = an N-acylsphing-4-enine + 2 Fe(III)-[cytochrome b5] + 2 H2O. Its pathway is lipid metabolism; sphingolipid metabolism. Delta(4)-fatty-acid desaturase which introduces a double bond at the 4-position in the long-chain base (LCB) of ceramides. Required for sphingosine biosynthesis. The protein is Sphingolipid delta(4)-desaturase (dsd1) of Schizosaccharomyces pombe (strain 972 / ATCC 24843) (Fission yeast).